A 513-amino-acid chain; its full sequence is Mannosyl-oligosaccharide alpha-1,2-mannosidase 1B (513 aa).

An N-terminal signal peptide occupies residues 1-21 (MHLPSLSLSLTALAIASPSAA). Residues Asn97, Asn117, Asn150, Asn184, Asn251, Asn322, Asn348, and Asn368 are each glycosylated (N-linked (GlcNAc...) asparagine). An intrachain disulfide couples Cys334 to Cys363. Glu377 acts as the Proton donor in catalysis. Thr503 is a Ca(2+) binding site.

It belongs to the glycosyl hydrolase 47 family. Monomer. The cofactor is Ca(2+). It depends on Mg(2+) as a cofactor.

Its subcellular location is the cytoplasmic vesicle lumen. The catalysed reaction is N(4)-(alpha-D-Man-(1-&gt;2)-alpha-D-Man-(1-&gt;2)-alpha-D-Man-(1-&gt;3)-[alpha-D-Man-(1-&gt;2)-alpha-D-Man-(1-&gt;3)-[alpha-D-Man-(1-&gt;2)-alpha-D-Man-(1-&gt;6)]-alpha-D-Man-(1-&gt;6)]-beta-D-Man-(1-&gt;4)-beta-D-GlcNAc-(1-&gt;4)-beta-D-GlcNAc)-L-asparaginyl-[protein] (N-glucan mannose isomer 9A1,2,3B1,2,3) + 4 H2O = N(4)-(alpha-D-Man-(1-&gt;3)-[alpha-D-Man-(1-&gt;3)-[alpha-D-Man-(1-&gt;6)]-alpha-D-Man-(1-&gt;6)]-beta-D-Man-(1-&gt;4)-beta-D-GlcNAc-(1-&gt;4)-beta-D-GlcNAc)-L-asparaginyl-[protein] (N-glucan mannose isomer 5A1,2) + 4 beta-D-mannose. It catalyses the reaction N(4)-(alpha-D-Man-(1-&gt;2)-alpha-D-Man-(1-&gt;2)-alpha-D-Man-(1-&gt;3)-[alpha-D-Man-(1-&gt;3)-[alpha-D-Man-(1-&gt;2)-alpha-D-Man-(1-&gt;6)]-alpha-D-Man-(1-&gt;6)]-beta-D-Man-(1-&gt;4)-beta-D-GlcNAc-(1-&gt;4)-beta-D-GlcNAc)-L-asparaginyl-[protein] (N-glucan mannose isomer 8A1,2,3B1,3) + 3 H2O = N(4)-(alpha-D-Man-(1-&gt;3)-[alpha-D-Man-(1-&gt;3)-[alpha-D-Man-(1-&gt;6)]-alpha-D-Man-(1-&gt;6)]-beta-D-Man-(1-&gt;4)-beta-D-GlcNAc-(1-&gt;4)-beta-D-GlcNAc)-L-asparaginyl-[protein] (N-glucan mannose isomer 5A1,2) + 3 beta-D-mannose. The protein operates within protein modification; protein glycosylation. In terms of biological role, involved in the maturation of Asn-linked oligosaccharides. Progressively trims alpha-1,2-linked mannose residues from Man(9)GlcNAc(2) to produce Man(5)GlcNAc(2). This is Mannosyl-oligosaccharide alpha-1,2-mannosidase 1B (mns1B) from Aspergillus phoenicis (Aspergillus saitoi).